The chain runs to 802 residues: Post-transcriptional regulator mkt1 (802 aa).

Phosphoserine occurs at positions 227, 228, and 230.

This sequence belongs to the XPG/RAD2 endonuclease family. As to quaternary structure, interacts with pab1 binding protein ath1.

Involved in post-transcriptional regulation of gene expression by 3'-UTR-mediated RNA regulation. Promotes interactions between mRNA and poly(A)-binding protein. Binds the 3' UTR of mRNAs, centromeric transcripts and antisense-rDNA. Required for the establishment but not the maintenance of heterochromatin at pericentromeres, and for the maintenance of small domains of facultative heterochromatin known as HOODs. This Schizosaccharomyces pombe (strain 972 / ATCC 24843) (Fission yeast) protein is Post-transcriptional regulator mkt1.